We begin with the raw amino-acid sequence, 483 residues long: Glutamate--tRNA ligase (483 aa).

The short motif at 11–21 is the 'HIGH' region element; that stretch reads PSPTGLLHIGN. The 'KMSKS' region motif lies at 255-259; that stretch reads KLSKR. Lys258 is an ATP binding site.

This sequence belongs to the class-I aminoacyl-tRNA synthetase family. Glutamate--tRNA ligase type 1 subfamily. In terms of assembly, monomer.

The protein localises to the cytoplasm. The catalysed reaction is tRNA(Glu) + L-glutamate + ATP = L-glutamyl-tRNA(Glu) + AMP + diphosphate. Catalyzes the attachment of glutamate to tRNA(Glu) in a two-step reaction: glutamate is first activated by ATP to form Glu-AMP and then transferred to the acceptor end of tRNA(Glu). This Lactococcus lactis subsp. cremoris (strain SK11) protein is Glutamate--tRNA ligase.